A 1603-amino-acid polypeptide reads, in one-letter code: MKSIIIASLVALAIAASPALDRTFSPKSEYVYKFDGLLLSGLPTASSDASQTLISCRTRLQAVDDRYIHLQLTDIQYSASHIPQSEQWPKIESLEQRELSDEFKELLELPFRAQIRNGLISEIQFSSEDAEWSKNAKRSILNLFSLRKSAPVDEMNQDQKDMESDKDSLFFNVHEKTMEGDCEVAYTIVQEGEKTIYTKSVNFDKCITRPETAYGLRFGSECKECEKEGQFVKPQTVYTYTFKNEKLQESEVHSVYTLNVNGQEVVKSETRAKVTFVEESKINREIKKVSGPKEEIVYSMENEKLIEQFYQQGDKAEVNPFKAIEMEQKVEQLQEIFRQIQEHEQNTPETVHLIARAVRMFRMCTIEELKKVHTTIYTKAEKKVQLVIETTLAVAGTKNTIQHLIHHFEKKSITPLRAAELLKSVQETLYPSEHIADLLIQLAQSPLSEKYEPLRQSAWLAAGSVVRGFASKTQDLPLIRPASRQTKEKYVRVFMQHFRNADSTYEKVLALKTLGNAGIDLSVYELVQIIQDPRQPLSIRTEAVDALRLLKDVMPRKIQKVLLPVYKNRQNKPELRMAALWRMMHTIPEEPVLAHIVSQMENESNQHVAAFTYNVLRQFYKSTNPCYQQLAVRCSKILLFTRYQPQEQMLSTYSQLPLFNSEWLSGVQFDFATIFEKNAFLPKEVQASFETVFGGNWNKYFAQVGFSQQNFEQVILKTLEKLSLYGKQSDELRSRRVQSGIQMLQEIVKKMNIRPRVQQTDSQNAHAVFYLRYKEMDYIVLPIDMETIDTLVEKYVRNGEFDIKSLLTFLTNDSKFELHRALFFYEAERRIPTTIGMPLTISGKMPTILSINGKVSIELEKLGARLVLDIVPTVATTHVTEMRFWYPVIEQGVKSLQSARLHTPLRFESTVELKKNTLEITHKFVVPENKKTTVSVHTRPVAFIRVPKNQDSEYVEAEEKTISHSQYQMSTEEIDRQYETFGLRINAQGNVLSQWTLPMVLMTEQDFEYTLENKNRPVEFTARVTIGNLEKTDLSEIKFDKIFEKEFDLENNESENRRQYFHKMIREIQSEQGFKNLITLKLEAPQQMYWNTELRTVCDKWIRMCKVEMDARRSPMEHENKEWTLRTELLAARPQMPSSLRQLREQPHREVQLAFNAKWGSSKKSEITVNAQLEQSTEQKKFIRNIEREYKGIPEYELLIKAARLNQVNVVSEYKLTPQSEYTFSRIFDLIKAYNFWTVSEKRVQNENRRVVLQLSVEPLSRQYMNMTIQTPEQEVELKNVRIPRVVLPTIARSAMFQQTWEKTGATCKVDQSEVSTFDNVIYRAPLTTCYSLVAKDCSEQPRFAVLAKKINKNSEELLVKVVRREEEIVVKKSDDKFLVKVDGKKVNPTELEQYNIEILGDNLIVIRLPQGEVRFDGYTVKTNMPSVASQNQLCGLCGNNDGERDNEFMTADNYETEDVEEFHRSYLLKNEECEVENDRISEKKNYRNKWNREEKKSDYESSSDYESNYDEKETEKELVKKTLIKEFSNRVCFSIEPVSECRRGLESEKTSNKKIRFTCMPRHSKNARRFLKEAREQTVAELVDFPVSFVESVKIPTACVAY.

An N-terminal signal peptide occupies residues 1–15 (MKSIIIASLVALAIA). One can recognise a Vitellogenin domain in the interval 24–685 (FSPKSEYVYK…EKNAFLPKEV (662 aa)). The VWFD domain occupies 1306 to 1475 (ATCKVDQSEV…SYLLKNEECE (170 aa)). 2 disulfide bridges follow: Cys-1308–Cys-1438 and Cys-1330–Cys-1474. The disordered stretch occupies residues 1492–1513 (NREEKKSDYESSSDYESNYDEK).

In terms of processing, vitellogenin 5 undergoes little if any processing before being packaged into yolk platelets. As to expression, expressed in the intestine of adult hermaphrodites.

It is found in the secreted. Its function is as follows. Precursor of the egg-yolk proteins that are sources of nutrients during embryonic development. Together with other vitellogenins, may play a role in modulating life-span, acting via induction of autophagy and lysosomal lipolysis. The sequence is that of Vitellogenin-5 (vit-5) from Caenorhabditis elegans.